Here is a 165-residue protein sequence, read N- to C-terminus: Nucleotide-binding protein Ccon26_01810 (165 aa).

It belongs to the YajQ family.

Nucleotide-binding protein. This chain is Nucleotide-binding protein Ccon26_01810, found in Campylobacter concisus (strain 13826).